We begin with the raw amino-acid sequence, 394 residues long: L-lactate 2-monooxygenase (394 aa).

One can recognise an FMN hydroxy acid dehydrogenase domain in the interval 19–394 (VAPTLPMSYA…LTIDALRPTR (376 aa)). Tyr45 contacts a 2-oxocarboxylate. Residues 98 to 100 (PIG), Ser129, and Gln151 each bind FMN. A 2-oxocarboxylate is bound at residue Tyr153. Residue Thr179 coordinates FMN. A 2-oxocarboxylate is bound at residue Arg188. Position 267 (Lys267) interacts with FMN. Residue His291 is the Proton acceptor of the active site. Arg294 provides a ligand contact to a 2-oxocarboxylate. Residues 321 to 325 (DSGIR) and Arg345 each bind FMN.

Belongs to the FMN-dependent alpha-hydroxy acid dehydrogenase family. In terms of assembly, homotetramer. FMN serves as cofactor.

The enzyme catalyses (S)-lactate + O2 = acetate + CO2 + H2O. In terms of biological role, catalyzes the oxidative decarboxylation of (S)-lactate (L-lactate) to acetate and carbon dioxide. Its physiological role remains unknown. The sequence is that of L-lactate 2-monooxygenase from Mycolicibacterium smegmatis (Mycobacterium smegmatis).